Here is a 458-residue protein sequence, read N- to C-terminus: Phosphoglucosamine mutase (458 aa).

The active-site Phosphoserine intermediate is the Ser-106. Mg(2+) contacts are provided by Ser-106, Asp-247, Asp-249, and Asp-251. A Phosphoserine modification is found at Ser-106.

Belongs to the phosphohexose mutase family. Mg(2+) serves as cofactor. Activated by phosphorylation.

The enzyme catalyses alpha-D-glucosamine 1-phosphate = D-glucosamine 6-phosphate. Its function is as follows. Catalyzes the conversion of glucosamine-6-phosphate to glucosamine-1-phosphate. The polypeptide is Phosphoglucosamine mutase (Chlamydia trachomatis serovar A (strain ATCC VR-571B / DSM 19440 / HAR-13)).